The chain runs to 1091 residues: Protein diaphanous (1091 aa).

The segment at 1–37 is disordered; sequence MSRHEKTKSTGGGLLDSLFGRPSKSKGGTISSGTLAH. The tract at residues 1-56 is basic region; it reads MSRHEKTKSTGGGLLDSLFGRPSKSKGGTISSGTLAHGGRPVSADNYVVPGVEDFE. Positions 25-34 are enriched in low complexity; that stretch reads SKGGTISSGT. The 373-residue stretch at 59-431 folds into the GBD/FH3 domain; that stretch reads IQQLSVAELD…QIVFHKGYCD (373 aa). A coiled-coil region spans residues 455 to 496; sequence KAKESKRSEEYEKKIEQLESAKQEAEAKAAHLEEKVKLMEAN. Disordered stretches follow at residues 499–589, 994–1021, and 1039–1072; these read AAPS…MMMG, RLQE…DMDA, and GSAF…RTRV. Residues 512 to 572 show a composition bias toward pro residues; it reads PMPPPPPGGG…MGGPPPPPMP (61 aa). Residues 512–596 enclose the FH1 domain; sequence PMPPPPPGGG…MMGPMVPVLP (85 aa). The FH2 domain maps to 601–1001; the sequence is PKKKWDVKNP…KRRLQEAREQ (401 aa). Residues 994–1010 are compositionally biased toward basic and acidic residues; the sequence is RLQEAREQSAREQQERQ. The DAD domain occupies 1022-1054; sequence PQTQEGVMDSLLEALQTGSAFGQRNRQARRQRP.

This sequence belongs to the formin homology family. Diaphanous subfamily. In terms of assembly, may interact (via CBD/FH3 domain) with Rho1.

It is found in the cytoplasm. Its subcellular location is the cytoskeleton. The protein resides in the cleavage furrow. It localises to the apical cell membrane. Functionally, required for cytokinesis in both mitosis and meiosis. Has a role in actin cytoskeleton organization and is essential for many, if not all, actin-mediated events involving membrane invagination. May serve as a mediator between signaling molecules and actin organizers at specific phases of the cell cycle. Possible component of the contractile ring or may control its function. In Drosophila melanogaster (Fruit fly), this protein is Protein diaphanous (dia).